Consider the following 867-residue polypeptide: Protein melted homolog (867 aa).

The segment at 480-505 is disordered; the sequence is MPSSSRTNVHLSQAASSSRGHSLPQT. The PH domain maps to 753–860; the sequence is EKVLEGQLKE…WLHCLQIAMA (108 aa).

This sequence belongs to the MELT/VEPH family.

The protein localises to the cell membrane. This Caenorhabditis briggsae protein is Protein melted homolog.